A 246-amino-acid polypeptide reads, in one-letter code: Ribosomal RNA small subunit methyltransferase J (246 aa).

Residues 115–116 and Asp-169 contribute to the S-adenosyl-L-methionine site; that span reads ER.

It belongs to the methyltransferase superfamily. RsmJ family.

The protein localises to the cytoplasm. It carries out the reaction guanosine(1516) in 16S rRNA + S-adenosyl-L-methionine = N(2)-methylguanosine(1516) in 16S rRNA + S-adenosyl-L-homocysteine + H(+). Functionally, specifically methylates the guanosine in position 1516 of 16S rRNA. In Buchnera aphidicola subsp. Acyrthosiphon pisum (strain 5A), this protein is Ribosomal RNA small subunit methyltransferase J.